A 178-amino-acid polypeptide reads, in one-letter code: uncharacterized protein (178 aa).

Positions 1–23 (MTMFKKISVLFFTLILAGCSSWS) are cleaved as a signal peptide.

This is an uncharacterized protein from Haemophilus influenzae (strain ATCC 51907 / DSM 11121 / KW20 / Rd).